Reading from the N-terminus, the 120-residue chain is Small ribosomal subunit protein uS13m (120 aa).

The protein belongs to the universal ribosomal protein uS13 family. Part of the small ribosomal subunit.

The protein localises to the mitochondrion. Located at the top of the head of the small subunit, it contacts several helices of the 18S rRNA. The polypeptide is Small ribosomal subunit protein uS13m (RPS13) (Marchantia polymorpha (Common liverwort)).